A 185-amino-acid chain; its full sequence is Elongation factor P (185 aa).

This sequence belongs to the elongation factor P family.

It localises to the cytoplasm. It functions in the pathway protein biosynthesis; polypeptide chain elongation. In terms of biological role, involved in peptide bond synthesis. Stimulates efficient translation and peptide-bond synthesis on native or reconstituted 70S ribosomes in vitro. Probably functions indirectly by altering the affinity of the ribosome for aminoacyl-tRNA, thus increasing their reactivity as acceptors for peptidyl transferase. This is Elongation factor P from Burkholderia cenocepacia (strain HI2424).